The sequence spans 317 residues: NAC domain-containing protein 19 (317 aa).

Positions 14–162 (LPPGFRFYPT…DWVLCRIYKK (149 aa)) constitute an NAC domain.

In terms of assembly, dimer. Interacts with RHA2A, RHA2B or RHG1A, but not with RHA3A or RHA3B. As to expression, expressed in stems, flowers, cauline leaves and rosettes.

The protein resides in the nucleus. Transcription factors that bind specifically to the 5'-CATGTG-3' motif. This Arabidopsis thaliana (Mouse-ear cress) protein is NAC domain-containing protein 19 (NAC019).